The following is a 311-amino-acid chain: Putative mitochondrial transporter UCP3 (311 aa).

The Mitochondrial intermembrane segment spans residues 1–10 (MVGLQPSERP). The helical transmembrane segment at 11-32 (PTTSVKFLAAGTAACFADLLTF) threads the bilayer. Solcar repeat units lie at residues 11–105 (PTTS…VKQF), 114–205 (SSII…IKEK), and 214–299 (DNFP…MKRA). The Mitochondrial matrix portion of the chain corresponds to 33–76 (PLDTAKVRLQIQGENQAALAARSAQYRGVLGTILTMVRTEGPRS). A helical membrane pass occupies residues 77–99 (LYSGLVAGLQRQMSFASIRIGLY). Residues 100-119 (DSVKQFYTPKGSDHSSIITR) lie on the Mitochondrial intermembrane side of the membrane. Residues 120–136 (ILAGCTTGAMAVTCAQP) traverse the membrane as a helical segment. The Mitochondrial matrix portion of the chain corresponds to 137–182 (TDVVKIRFQASMHTGLGGNRKYSGTMDAYRTIAREEGVRGLWKGIL). A helical membrane pass occupies residues 183–199 (PNITRNAIVNCGEMVTY). Over 200–216 (DIIKEKLLDYHLLTDNF) the chain is Mitochondrial intermembrane. A helical membrane pass occupies residues 217-236 (PCHFVSAFGAGFCATLVASP). The Mitochondrial matrix portion of the chain corresponds to 237-270 (VDVVKTRYMNSPPGQYHSPFDCMLKMVTQEGPTA). The helical transmembrane segment at 271 to 293 (FYKGFTPSFLRLGSWNVVMFVTY) threads the bilayer. Residues 278–300 (SFLRLGSWNVVMFVTYEQMKRAL) are purine nucleotide binding. Over 294–311 (EQMKRALMKVQMLRDSPF) the chain is Mitochondrial intermembrane.

Belongs to the mitochondrial carrier (TC 2.A.29) family. As to quaternary structure, interacts with HAX1; the interaction is direct and calcium-dependent.

The protein resides in the mitochondrion inner membrane. Putative transmembrane transporter that plays a role in mitochondrial metabolism via an as yet unclear mechanism. Originally, this mitochondrial protein was thought to act as a proton transmembrane transporter from the mitochondrial intermembrane space into the matrix, causing proton leaks through the inner mitochondrial membrane, thereby uncoupling mitochondrial membrane potential generation from ATP synthesis. However, this function is controversial and uncoupling may not be the function, or at least not the main function, but rather a consequence of more conventional metabolite transporter activity. This chain is Putative mitochondrial transporter UCP3, found in Bos taurus (Bovine).